We begin with the raw amino-acid sequence, 489 residues long: Ulvan Lyase-PL25 (489 aa).

The first 31 residues, 1–31 (MNLNKTLRKNSPSGYKALLTFSIICGLMATG), serve as a signal peptide directing secretion. Residue cysteine 32 is the site of N-palmitoyl cysteine attachment. The S-diacylglycerol cysteine moiety is linked to residue cysteine 32. 2 residues coordinate substrate: asparagine 60 and asparagine 122. The Proton donor role is filled by histidine 123. Positions 125 and 143 each coordinate substrate. Tyrosine 188 serves as the catalytic Proton acceptor. Arginine 204, histidine 208, and tyrosine 246 together coordinate substrate. Zn(2+) is bound at residue histidine 208. Positions 264, 266, and 278 each coordinate Zn(2+). Histidine 278 contributes to the substrate binding site.

It belongs to the polysaccharide lyase 25 family.

Its subcellular location is the cell membrane. Ulvan lyase involved in ulvan degradation. Ulvan is the main polysaccharide component of the Ulvales (green seaweed) cell wall. It is composed of disaccharide building blocks comprising 3-sulfated rhamnose (Rha3S) linked to D-glucuronic acid (GlcA), L-iduronic acid (IduA), or D-xylose (Xyl). Ulvan lyase catalyzes the endolytic cleavage of the glycosidic bond between Rha3S and the uronic acids GlcA or IduA, producing oligosaccharides that have unsaturated 4-deoxy-L-threo-hex-4-enopyranosiduronic acid (deltaUA) at the non-reducing end. This results eventually in the degradation of the ulvan polysaccharide into deltaUA-Rha3S disaccharides and deltaUA-Rha3S-Xyl-Rha3S tetrasaccharides. The protein is Ulvan Lyase-PL25 of Pseudoalteromonas sp. (strain PLSV).